The following is a 936-amino-acid chain: Periplasmic nitrate reductase (936 aa).

A signal peptide (tat-type signal) is located at residues 1 to 31 (MALSRRDFLKSSAAAAAASAVGLSVPKEVEA). Residues 40–96 (WRWDKAVCRFCGTGCGIMIATKDDRIVAVKGDPLAPVNRGLNCIKGYFTAKIMYGAD) form the 4Fe-4S Mo/W bis-MGD-type domain. Residues Cys-47, Cys-50, Cys-54, and Cys-82 each contribute to the [4Fe-4S] cluster site. Residues Lys-84, Gln-152, Asn-177, Cys-181, 214–221 (WGSNMAEM), 246–250 (STYTH), Met-424, Gln-428, Asn-534, 559–560 (SD), Lys-582, Asp-609, and 826–835 (TGRVLEHWHS) contribute to the Mo-bis(molybdopterin guanine dinucleotide) site. Trp-902 is a substrate binding site. Mo-bis(molybdopterin guanine dinucleotide) contacts are provided by Asn-910 and Lys-927.

Belongs to the prokaryotic molybdopterin-containing oxidoreductase family. NasA/NapA/NarB subfamily. As to quaternary structure, component of the periplasmic nitrate reductase NapAB complex composed of NapA and NapB. [4Fe-4S] cluster is required as a cofactor. The cofactor is Mo-bis(molybdopterin guanine dinucleotide). Post-translationally, predicted to be exported by the Tat system. The position of the signal peptide cleavage has not been experimentally proven.

Its subcellular location is the periplasm. It catalyses the reaction 2 Fe(II)-[cytochrome] + nitrate + 2 H(+) = 2 Fe(III)-[cytochrome] + nitrite + H2O. Catalytic subunit of the periplasmic nitrate reductase complex NapAB. Receives electrons from NapB and catalyzes the reduction of nitrate to nitrite. The sequence is that of Periplasmic nitrate reductase from Nitratiruptor sp. (strain SB155-2).